The chain runs to 435 residues: Ribosomal protein uS12 methylthiotransferase RimO (435 aa).

The MTTase N-terminal domain maps to 3 to 115 (KKLHVVSLGC…IDELISQKKS (113 aa)). [4Fe-4S] cluster-binding residues include Cys-12, Cys-46, Cys-78, Cys-146, Cys-150, and Cys-153. The 230-residue stretch at 132–361 (TGSNYHAYIK…DAIVKKQQMK (230 aa)) folds into the Radical SAM core domain.

This sequence belongs to the methylthiotransferase family. RimO subfamily. Requires [4Fe-4S] cluster as cofactor.

The protein resides in the cytoplasm. The enzyme catalyses L-aspartate(89)-[ribosomal protein uS12]-hydrogen + (sulfur carrier)-SH + AH2 + 2 S-adenosyl-L-methionine = 3-methylsulfanyl-L-aspartate(89)-[ribosomal protein uS12]-hydrogen + (sulfur carrier)-H + 5'-deoxyadenosine + L-methionine + A + S-adenosyl-L-homocysteine + 2 H(+). In terms of biological role, catalyzes the methylthiolation of an aspartic acid residue of ribosomal protein uS12. In Nitratiruptor sp. (strain SB155-2), this protein is Ribosomal protein uS12 methylthiotransferase RimO.